Reading from the N-terminus, the 364-residue chain is tRNA 2-selenouridine synthase (364 aa).

One can recognise a Rhodanese domain in the interval 14–137 (LLADTPLIDV…LRQTAIQATW (124 aa)). Cys97 serves as the catalytic S-selanylcysteine intermediate.

Belongs to the SelU family. Monomer.

It catalyses the reaction 5-methylaminomethyl-2-thiouridine(34) in tRNA + selenophosphate + (2E)-geranyl diphosphate + H2O + H(+) = 5-methylaminomethyl-2-selenouridine(34) in tRNA + (2E)-thiogeraniol + phosphate + diphosphate. The catalysed reaction is 5-methylaminomethyl-2-thiouridine(34) in tRNA + (2E)-geranyl diphosphate = 5-methylaminomethyl-S-(2E)-geranyl-thiouridine(34) in tRNA + diphosphate. It carries out the reaction 5-methylaminomethyl-S-(2E)-geranyl-thiouridine(34) in tRNA + selenophosphate + H(+) = 5-methylaminomethyl-2-(Se-phospho)selenouridine(34) in tRNA + (2E)-thiogeraniol. The enzyme catalyses 5-methylaminomethyl-2-(Se-phospho)selenouridine(34) in tRNA + H2O = 5-methylaminomethyl-2-selenouridine(34) in tRNA + phosphate. Its function is as follows. Involved in the post-transcriptional modification of the uridine at the wobble position (U34) of tRNA(Lys), tRNA(Glu) and tRNA(Gln). Catalyzes the conversion of 2-thiouridine (S2U-RNA) to 2-selenouridine (Se2U-RNA). Acts in a two-step process involving geranylation of 2-thiouridine (S2U) to S-geranyl-2-thiouridine (geS2U) and subsequent selenation of the latter derivative to 2-selenouridine (Se2U) in the tRNA chain. The polypeptide is tRNA 2-selenouridine synthase (Salmonella paratyphi A (strain ATCC 9150 / SARB42)).